A 624-amino-acid chain; its full sequence is DNA (cytosine-5)-methyltransferase DRM1 (624 aa).

2 UBA domains span residues Arg-57–Tyr-100 and Ser-108–Tyr-149. Residues Asp-160–Ser-189 form a disordered region. The span at Asn-166–Leu-185 shows a compositional bias: acidic residues. The UBA 3 domain occupies Ser-188 to Ala-231. An SAM-dependent MTase DRM-type domain is found at Met-291–Met-622.

This sequence belongs to the class I-like SAM-binding methyltransferase superfamily. DRM-methyltransferase family.

The protein resides in the nucleus. The enzyme catalyses a 2'-deoxycytidine in DNA + S-adenosyl-L-methionine = a 5-methyl-2'-deoxycytidine in DNA + S-adenosyl-L-homocysteine + H(+). Involved in de novo DNA methylation. Controls asymmetric and CpNpG methylation. Required for FWA gene silencing but not for the maintenance of SUP gene silencing. Functionally redundant to CMT3 to maintain non-CpG methylation. Involved in RNA-directed DNA methylation. The protein is DNA (cytosine-5)-methyltransferase DRM1 (DRM1) of Arabidopsis thaliana (Mouse-ear cress).